Here is a 294-residue protein sequence, read N- to C-terminus: Nucleotide-binding protein CLB_3433 (294 aa).

8 to 15 is a binding site for ATP; it reads GLSGAGKT. Residue 59 to 62 coordinates GTP; that stretch reads DIRG.

This sequence belongs to the RapZ-like family.

Functionally, displays ATPase and GTPase activities. The chain is Nucleotide-binding protein CLB_3433 from Clostridium botulinum (strain ATCC 19397 / Type A).